Reading from the N-terminus, the 207-residue chain is Dephospho-CoA kinase (207 aa).

Positions 5–203 constitute a DPCK domain; sequence AVGLTGGVAC…ARYRALASVF (199 aa). ATP is bound at residue 13-18; it reads ACGKSL.

The protein belongs to the CoaE family.

Its subcellular location is the cytoplasm. The catalysed reaction is 3'-dephospho-CoA + ATP = ADP + CoA + H(+). It functions in the pathway cofactor biosynthesis; coenzyme A biosynthesis; CoA from (R)-pantothenate: step 5/5. Its function is as follows. Catalyzes the phosphorylation of the 3'-hydroxyl group of dephosphocoenzyme A to form coenzyme A. In Xylella fastidiosa (strain Temecula1 / ATCC 700964), this protein is Dephospho-CoA kinase.